A 131-amino-acid chain; its full sequence is Profilin (131 aa).

The protein belongs to the profilin family. In terms of assembly, occurs in many kinds of cells as a complex with monomeric actin in a 1:1 ratio.

The protein localises to the cytoplasm. It is found in the cytoskeleton. In terms of biological role, binds to actin and affects the structure of the cytoskeleton. At high concentrations, profilin prevents the polymerization of actin, whereas it enhances it at low concentrations. By binding to PIP2, it inhibits the formation of IP3 and DG. This is Profilin from Cucumis melo (Muskmelon).